We begin with the raw amino-acid sequence, 446 residues long: Rhamnogalacturonase A (446 aa).

The signal sequence occupies residues 1-18 (MPALPILALALAPLLVNG). A disulfide bond links Cys-39 and Cys-65. N-linked (GlcNAc...) asparagine glycans are attached at residues Asn-50, Asn-115, and Asn-124. Asp-216 functions as the Proton donor in the catalytic mechanism. Cys-218 and Cys-235 are joined by a disulfide. Residues Asn-236, Asn-281, and Asn-318 are each glycosylated (N-linked (GlcNAc...) asparagine). 2 disulfides stabilise this stretch: Cys-341/Cys-347 and Cys-369/Cys-378.

Belongs to the glycosyl hydrolase 28 family.

The protein localises to the secreted. It carries out the reaction Endohydrolysis of alpha-D-GalA-(1-&gt;2)-alpha-L-Rha glycosidic bond in the rhamnogalacturonan I backbone with initial inversion of anomeric configuration releasing oligosaccharides with beta-D-GalA at the reducing end.. Functionally, pectinolytic enzymes consist of four classes of enzymes: pectine lyase, polygalacturonase, pectin methylesterase and rhamnogalacturonase. Hydrolyzes alpha-D-galacturonopyranosyl-(1,2)-alpha-L-rhamnopyranosyl linkages in the backbone of the hairy regions of pectins. This chain is Rhamnogalacturonase A (rhgA), found in Aspergillus niger.